Consider the following 380-residue polypeptide: Tetratricopeptide repeat protein 19, mitochondrial (380 aa).

The N-terminal 70 residues, 1–70, are a transit peptide targeting the mitochondrion; it reads MFRLLSWSLG…AALAWFSRPA (70 aa). 5 TPR repeats span residues 136–169, 179–212, 237–270, 279–312, and 318–351; these read TYTYDLMANLAFIRGQLENAEQLFKATMSYLLGG, IEISLKLASIYAAQNRQEFAVAGYEFCISTLEEK, GMCLDACARYLLFSKQPSQAQRMYEKALQISEEI, IVLMSDLATTLDAQGRFDEAYIYMQRASDLARQI, and HMVLSNLAAVLMHRERYTQAKEIYQEALKQAKLK.

It belongs to the TTC19 family. In terms of assembly, binds to the mature mitochondrial complex III dimer, after the incorporation of the Rieske protein UQCRFS1. Interacts with UQCRC1 and UQCRFS1. Interacts with ZFYVE26 and CHMP4B. In terms of processing, proteolytically cleaved by PARL.

The protein resides in the mitochondrion inner membrane. In terms of biological role, required for the preservation of the structural and functional integrity of mitochondrial respiratory complex III by allowing the physiological turnover of the Rieske protein UQCRFS1. Involved in the clearance of UQCRFS1 N-terminal fragments, which are produced upon incorporation of UQCRFS1 into the complex III and whose presence is detrimental for its catalytic activity. The sequence is that of Tetratricopeptide repeat protein 19, mitochondrial (TTC19) from Homo sapiens (Human).